A 100-amino-acid chain; its full sequence is Large ribosomal subunit protein bL28 (100 aa).

This sequence belongs to the bacterial ribosomal protein bL28 family.

The polypeptide is Large ribosomal subunit protein bL28 (Gluconacetobacter diazotrophicus (strain ATCC 49037 / DSM 5601 / CCUG 37298 / CIP 103539 / LMG 7603 / PAl5)).